The chain runs to 554 residues: Probable ATP-binding cassette sub-family F member 3 homolog (554 aa).

ABC transporter domains lie at 89–285 (GDLH…ASAR) and 351–554 (IEFV…GLGV). ATP contacts are provided by residues 122–129 (GRNGIGKT) and 383–390 (GANGQGKS).

The protein belongs to the ABC transporter superfamily. ABCF family. EF3 subfamily.

In Encephalitozoon cuniculi (strain GB-M1) (Microsporidian parasite), this protein is Probable ATP-binding cassette sub-family F member 3 homolog.